The sequence spans 1734 residues: Gag-pol polyprotein (1734 aa).

Gly-2 carries the N-myristoyl glycine; by host lipid modification. Positions 109 to 112 (PTAP) match the PTAP/PSAP motif motif. The interval 112-217 (PILPSGPSTQ…STTSRAFPLR (106 aa)) is disordered. The LYPX(n)L motif motif lies at 128-132 (LYPAF). A PPXY motif motif is present at residues 161–164 (PPPY). Residue Ser-191 is modified to Phosphoserine; by host. The interval 344–392 (GRSPTNLAKVKGITQGPNESPSAFLERLKEAYRRYTPYDPEDPGQETNV) is interaction with host PIAS4. Positions 429-434 (IFNKRE) are interaction with host UBE2I. 2 stretches are compositionally biased toward basic and acidic residues: residues 433–474 (RETP…REMS) and 485–498 (RQDRQGGERRRPQL). Disordered regions lie at residues 433 to 498 (RETP…RPQL) and 512 to 551 (WAKDCPKKPRGPRGPRPQTSLLTLDDQGGQGQEPPPEPRI). Residues 501–518 (DQCAYCKEKGHWAKDCPK) form a CCHC-type zinc finger. One can recognise a Peptidase A2 domain in the interval 560–630 (VTFLVDTGAQ…CPYPLLGRDL (71 aa)). The active-site Protease; shared with dimeric partner is Asp-565. The Reverse transcriptase domain occupies 740–931 (LDQGILVPCQ…KQVKYLGYLL (192 aa)). Positions 808, 882, 883, 1182, 1220, 1241, and 1311 each coordinate Mg(2+). The 147-residue stretch at 1173–1319 (PDADHTWYTD…ADQAAREAAI (147 aa)) folds into the RNase H type-1 domain. Residues 1386 to 1426 (HRLTHLGYQKMKALLDRGESPYYMLNRDKTLQYVADSCTVC) form an HHCC-type zinc finger. The 159-residue stretch at 1443-1601 (RGHRPGTHWE…TPYEILYGAP (159 aa)) folds into the Integrase catalytic domain. Mg(2+)-binding residues include Asp-1454 and Asp-1513.

Homohexamer; further associates as homomultimer. The virus core is composed of a lattice formed from hexagonal rings, each containing six capsid monomers. Interacts with mouse UBE2I and mouse PIAS4. In terms of assembly, interacts (via PPXY motif) with host NEDD4. Interacts (via PSAP motif) with host TSG101. Interacts (via LYPX(n)L motif) with host PDCD6IP. As to quaternary structure, the reverse transcriptase is a monomer (Potential). Interacts (via RNase domains) with host release factor ETF1; this interaction is essential for translational readthrough of amber codon between viral gag and pol genes, as well as for viral replication. Homodimer. It depends on Mg(2+) as a cofactor. In terms of processing, ubiquitinated by ITCH. Gag can recruit the ubiquitin ligase Itch in an L domain-independent manner to facilitate virus release via a mechanism that involves Gag ubiquitination. Specific enzymatic cleavages by the viral protease yield mature proteins. The protease is released by autocatalytic cleavage. The polyprotein is cleaved during and after budding, this process is termed maturation. Post-translationally, sumoylated; which is required for virus replication. In terms of processing, phosphorylated on serine residues.

The protein localises to the virion. The protein resides in the host cell membrane. It localises to the host late endosome membrane. Its subcellular location is the host endosome. It is found in the host multivesicular body. The protein localises to the host cytoplasm. It catalyses the reaction DNA(n) + a 2'-deoxyribonucleoside 5'-triphosphate = DNA(n+1) + diphosphate. It carries out the reaction Endonucleolytic cleavage to 5'-phosphomonoester.. Most efficiently inhibited by Amprenavir, which is able to block Gag-Pol processing in infected cells. Its function is as follows. Plays a role in budding and is processed by the viral protease during virion maturation outside the cell. During budding, it recruits, in a PPXY-dependent or independent manner, Nedd4-like ubiquitin ligases that conjugate ubiquitin molecules to Gag-Pol, or to Gag-Pol binding host factors. Interaction with HECT ubiquitin ligases probably links the viral protein to the host ESCRT pathway and facilitates release. In terms of biological role, targets Gag and gag-pol polyproteins to the plasma membrane via a multipartite membrane binding signal, that includes its myristoylated N-terminus. Also mediates nuclear localization of the pre-integration complex. Functionally, constituent of the pre-integration complex (PIC) which tethers the latter to mitotic chromosomes. This allows the integration of the viral genome into the host DNA. Forms the spherical core of the virion that encapsulates the genomic RNA-nucleocapsid complex. Its function is as follows. Involved in the packaging and encapsidation of two copies of the genome. Binds with high affinity to conserved UCUG elements within the packaging signal, located near the 5'-end of the genome. This binding is dependent on genome dimerization. Acts as a nucleic acid chaperone which is involved in rearrangement of nucleic acid secondary structures during gRNA retrotranscription. In terms of biological role, the aspartyl protease mediates proteolytic cleavages of Gag and Gag-Pol polyproteins during or shortly after the release of the virion from the plasma membrane. Cleavages take place as an ordered, step-wise cascade to yield mature proteins. This process is called maturation. Displays maximal activity during the budding process just prior to particle release from the cell (Potential). Cleaves the translation initiation factor eIF4G leading to the inhibition of host cap-dependent translation. Functionally, RT is a multifunctional enzyme that converts the viral dimeric RNA genome into dsDNA in the cytoplasm, shortly after virus entry into the cell. This enzyme displays a DNA polymerase activity that can copy either DNA or RNA templates, and a ribonuclease H (RNase H) activity that cleaves the RNA strand of RNA-DNA heteroduplexes in a partially processive 3' to 5' endonucleasic mode. Conversion of viral genomic RNA into dsDNA requires many steps. A tRNA binds to the primer-binding site (PBS) situated at the 5' end of the viral RNA. RT uses the 3' end of the tRNA primer to perform a short round of RNA-dependent minus-strand DNA synthesis. The reading proceeds through the U5 region and ends after the repeated (R) region which is present at both ends of viral RNA. The portion of the RNA-DNA heteroduplex is digested by the RNase H, resulting in a ssDNA product attached to the tRNA primer. This ssDNA/tRNA hybridizes with the identical R region situated at the 3' end of viral RNA. This template exchange, known as minus-strand DNA strong stop transfer, can be either intra- or intermolecular. RT uses the 3' end of this newly synthesized short ssDNA to perform the RNA-dependent minus-strand DNA synthesis of the whole template. RNase H digests the RNA template except for a polypurine tract (PPT) situated at the 5' end of the genome. It is not clear if both polymerase and RNase H activities are simultaneous. RNase H probably can proceed both in a polymerase-dependent (RNA cut into small fragments by the same RT performing DNA synthesis) and a polymerase-independent mode (cleavage of remaining RNA fragments by free RTs). Secondly, RT performs DNA-directed plus-strand DNA synthesis using the PPT that has not been removed by RNase H as primers. PPT and tRNA primers are then removed by RNase H. The 3' and 5' ssDNA PBS regions hybridize to form a circular dsDNA intermediate. Strand displacement synthesis by RT to the PBS and PPT ends produces a blunt ended, linear dsDNA copy of the viral genome that includes long terminal repeats (LTRs) at both ends. Catalyzes viral DNA integration into the host chromosome, by performing a series of DNA cutting and joining reactions. This enzyme activity takes place after virion entry into a cell and reverse transcription of the RNA genome in dsDNA. The first step in the integration process is 3' processing. This step requires a complex comprising the viral genome, matrix protein and integrase. This complex is called the pre-integration complex (PIC). The integrase protein removes 2 nucleotides from each 3' end of the viral DNA, leaving recessed CA OH's at the 3' ends. In the second step that requires cell division, the PIC enters cell nucleus. In the third step, termed strand transfer, the integrase protein joins the previously processed 3' ends to the 5' ends of strands of target cellular DNA at the site of integration. The last step is viral DNA integration into host chromosome. In Mus musculus (Mouse), this protein is Gag-pol polyprotein (gag-pol).